We begin with the raw amino-acid sequence, 968 residues long: RNA polymerase-associated protein RapA (968 aa).

The 170-residue stretch at 163–332 (EVGSRYAPRV…FARLRLLDPD (170 aa)) folds into the Helicase ATP-binding domain. ATP is bound at residue 176–183 (DEVGLGKT). The short motif at 278–281 (DEAH) is the DEAH box element. Residues 491–655 (RVDWLIEFLK…EFADELINVL (165 aa)) enclose the Helicase C-terminal domain.

This sequence belongs to the SNF2/RAD54 helicase family. RapA subfamily. In terms of assembly, interacts with the RNAP. Has a higher affinity for the core RNAP than for the holoenzyme. Its ATPase activity is stimulated by binding to RNAP.

Functionally, transcription regulator that activates transcription by stimulating RNA polymerase (RNAP) recycling in case of stress conditions such as supercoiled DNA or high salt concentrations. Probably acts by releasing the RNAP, when it is trapped or immobilized on tightly supercoiled DNA. Does not activate transcription on linear DNA. Probably not involved in DNA repair. This is RNA polymerase-associated protein RapA from Shewanella frigidimarina (strain NCIMB 400).